The sequence spans 357 residues: MIALPQDRMDQLLKRFSMIESQMANNPDSETYVKLASEYSELQEVVGKIRELTDSRKEAVDLAAMRDDASTDAEMRALALEELPGVEKRIEGLEQEVQILLLPKDAADEKNAILEIRAGTGGLEAALFAGDLFRMYERYAAEKGWRVELVSASEGDAGGYKEIIATVSGKGVFSKLKFESGVHRVQRVPETEAGGRIHTSAATVAVLPEAEDIDIEIRNEDIRIDTMRASGAGGQHVNTTDSAVRITHIPTGIMVVQAEKSQHQNRARAMQILRARLYDMERQKADTERSESRRSQVGSGDRSERIRTYNFPQGRVTDHRINLTLYKLDRVMEGDLDELVDALISDHQTALLTELGH.

Gln235 is subject to N5-methylglutamine. Positions 282–294 (RQKADTERSESRR) are enriched in basic and acidic residues. A disordered region spans residues 282–308 (RQKADTERSESRRSQVGSGDRSERIRT).

It belongs to the prokaryotic/mitochondrial release factor family. In terms of processing, methylated by PrmC. Methylation increases the termination efficiency of RF1.

It localises to the cytoplasm. Peptide chain release factor 1 directs the termination of translation in response to the peptide chain termination codons UAG and UAA. In Brucella anthropi (strain ATCC 49188 / DSM 6882 / CCUG 24695 / JCM 21032 / LMG 3331 / NBRC 15819 / NCTC 12168 / Alc 37) (Ochrobactrum anthropi), this protein is Peptide chain release factor 1.